The following is a 265-amino-acid chain: MAVESAAVGVFDSGVGGLSVLREIRARLPSESLLYVADNAHVPYGEKSAEYIRERCERIGDFLLEQGAKALVLACNTATAAAAAELRERYPQVQLVAMEPAVKPAAAATRNGRVGVLATTGTLKSARFAALLDRFASDVQVFTQPCPGLVERIEAGDLYGPQTRALLERLLAPILEQGCDTLILGCTHYPFVKPLLAELIPAEMAVIDTGAAVARQLERVLSARALLASGQAATPRFWTSALPEEMERILPILWGSPESVGKLVV.

Substrate is bound by residues 12 to 13 (DS) and 44 to 45 (YG). Cysteine 75 functions as the Proton donor/acceptor in the catalytic mechanism. 76–77 (NT) contributes to the substrate binding site. Cysteine 186 (proton donor/acceptor) is an active-site residue. 187 to 188 (TH) lines the substrate pocket.

This sequence belongs to the aspartate/glutamate racemases family.

The enzyme catalyses L-glutamate = D-glutamate. It functions in the pathway cell wall biogenesis; peptidoglycan biosynthesis. Its function is as follows. Provides the (R)-glutamate required for cell wall biosynthesis. The chain is Glutamate racemase from Pseudomonas aeruginosa (strain UCBPP-PA14).